The sequence spans 371 residues: Cytochrome b (371 aa).

Transmembrane regions (helical) follow at residues 25–45, 69–90, 105–125, and 170–190; these read FGSMLLTCLGLQVLTGFFLAV, WMMQNLHAIGASMFFICIYIHI, WMSGITLLITLMATAFFGYVL, and FFALHFILPFAIISLSSLHII. His75 and His89 together coordinate heme b. Residues His174 and His188 each coordinate heme b. An a ubiquinone-binding site is contributed by His193. Transmembrane regions (helical) follow at residues 218–238, 280–300, 312–332, and 339–358; these read HKDLLLLTLMIMSLFIISSFF, LGGALALVMSIMILFIIPFTH, LSQLMFWTLVSTFITITWAAT, and FIVISQVTSSLYFTFFLSTP.

It belongs to the cytochrome b family. As to quaternary structure, the cytochrome bc1 complex contains 3 respiratory subunits (MT-CYB, CYC1 and UQCRFS1), 2 core proteins (UQCRC1 and UQCRC2) and probably 6 low-molecular weight proteins. Heme b serves as cofactor.

It is found in the mitochondrion inner membrane. Component of the ubiquinol-cytochrome c reductase complex (complex III or cytochrome b-c1 complex) that is part of the mitochondrial respiratory chain. The b-c1 complex mediates electron transfer from ubiquinol to cytochrome c. Contributes to the generation of a proton gradient across the mitochondrial membrane that is then used for ATP synthesis. The chain is Cytochrome b (MT-CYB) from Aspidites melanocephalus (Black-headed python).